The following is a 346-amino-acid chain: Cysteinyl leukotriene receptor 2 (346 aa).

Over 1–42 (MERKFMSLQPSISVSEMEPNGTFSNNNSRNCTIENFKREFFP) the chain is Extracellular. 3 N-linked (GlcNAc...) asparagine glycosylation sites follow: Asn-20, Asn-26, and Asn-30. A helical membrane pass occupies residues 43–63 (IVYLIIFFWGVLGNGLSIYVF). Topologically, residues 64-72 (LQPYKKSTS) are cytoplasmic. A helical membrane pass occupies residues 73–93 (VNVFMLNLAISDLLFISTLPF). The Extracellular segment spans residues 94 to 123 (RADYYLRGSNWIFGDLACRIMSYSLYVNMY). Cysteines 111 and 187 form a disulfide. Residues 124–144 (SSIYFLTVLSVVRFLAMVHPF) form a helical membrane-spanning segment. At 145-153 (RLLHVTSIR) the chain is on the cytoplasmic side. A helical transmembrane segment spans residues 154 to 174 (SAWILCGIIWILIMASSIMLL). At 175 to 204 (DSGSEQNGSVTSCLELNLYKIAKLQTMNYI) the chain is on the extracellular side. Asn-181 is a glycosylation site (N-linked (GlcNAc...) asparagine). Residues 205–225 (ALVVGCLLPFFTLSICYLLII) form a helical membrane-spanning segment. Over 226-245 (RVLLKVEVPESGLRVSHRKA) the chain is Cytoplasmic. The helical transmembrane segment at 246-266 (LTTIIITLIIFFLCFLPYHTL) threads the bilayer. Topologically, residues 267–286 (RTVHLTTWKVGLCKDRLHKA) are extracellular. The helical transmembrane segment at 287–307 (LVITLALAAANACFNPLLYYF) threads the bilayer. Topologically, residues 308–346 (AGENFKDRLKSALRKGHPQKAKTKCVFPVSVWLRKETRV) are cytoplasmic.

This sequence belongs to the G-protein coupled receptor 1 family. Widely expressed, with highest levels in the heart, placenta, spleen, peripheral blood leukocytes and adrenal gland. In lung, expressed in the interstitial macrophages, and slightly in smooth muscle cells.

The protein resides in the cell membrane. Its function is as follows. Receptor for cysteinyl leukotrienes. The response is mediated via a G-protein that activates a phosphatidylinositol-calcium second messenger system. Stimulation by BAY u9773, a partial agonist, induces specific contractions of pulmonary veins and might also have an indirect role in the relaxation of the pulmonary vascular endothelium. The rank order of affinities for the leukotrienes is LTC4 = LTD4 &gt;&gt; LTE4. In Homo sapiens (Human), this protein is Cysteinyl leukotriene receptor 2 (CYSLTR2).